The sequence spans 589 residues: Putative phospholipase B-like 2 (589 aa).

Residues 1–41 form the signal peptide; sequence MVGQMYCYPGSHLARALTRALALALVLALLVGPFLSGLAGA. N-linked (GlcNAc...) asparagine glycans are attached at residues N88 and N110. The cysteines at positions 142 and 152 are disulfide-linked. 3 N-linked (GlcNAc...) asparagine glycosylation sites follow: N231, N436, and N465. A disulfide bridge connects residues C492 and C495. N515 is a glycosylation site (N-linked (GlcNAc...) asparagine).

Belongs to the phospholipase B-like family. Interacts with IGF2R. In terms of processing, the p76 protein is synthesized as a 80 kDa precursor which is then processed into a N-terminal 32 kDa form and a C-terminal 45 kDa form. Glycosylated; contains mannose 6-phosphate sugars. As to expression, ubiquitously expressed, with highest levels in heart, brain and liver.

The protein localises to the lysosome lumen. Functionally, putative phospholipase. This chain is Putative phospholipase B-like 2 (PLBD2), found in Homo sapiens (Human).